Consider the following 246-residue polypeptide: 1-(5-phosphoribosyl)-5-[(5-phosphoribosylamino)methylideneamino] imidazole-4-carboxamide isomerase (246 aa).

The active-site Proton acceptor is the D8. D131 acts as the Proton donor in catalysis.

Belongs to the HisA/HisF family.

It localises to the cytoplasm. The catalysed reaction is 1-(5-phospho-beta-D-ribosyl)-5-[(5-phospho-beta-D-ribosylamino)methylideneamino]imidazole-4-carboxamide = 5-[(5-phospho-1-deoxy-D-ribulos-1-ylimino)methylamino]-1-(5-phospho-beta-D-ribosyl)imidazole-4-carboxamide. The protein operates within amino-acid biosynthesis; L-histidine biosynthesis; L-histidine from 5-phospho-alpha-D-ribose 1-diphosphate: step 4/9. The sequence is that of 1-(5-phosphoribosyl)-5-[(5-phosphoribosylamino)methylideneamino] imidazole-4-carboxamide isomerase from Polaromonas sp. (strain JS666 / ATCC BAA-500).